The chain runs to 603 residues: Arginine--tRNA ligase (603 aa).

The 'HIGH' region motif lies at 143–153 (PNIAKEMHVGH).

The protein belongs to the class-I aminoacyl-tRNA synthetase family. In terms of assembly, monomer.

The protein localises to the cytoplasm. The catalysed reaction is tRNA(Arg) + L-arginine + ATP = L-arginyl-tRNA(Arg) + AMP + diphosphate. This is Arginine--tRNA ligase from Prochlorococcus marinus (strain MIT 9211).